The chain runs to 233 residues: Small ribosomal subunit protein uS3 (233 aa).

Residues 39-107 (VREFLKKRLG…PVHVNIEEVR (69 aa)) enclose the KH type-2 domain. The interval 212–233 (VQATPAAPEKKMRKGARNAAAN) is disordered.

It belongs to the universal ribosomal protein uS3 family. Part of the 30S ribosomal subunit. Forms a tight complex with proteins S10 and S14.

In terms of biological role, binds the lower part of the 30S subunit head. Binds mRNA in the 70S ribosome, positioning it for translation. The polypeptide is Small ribosomal subunit protein uS3 (Chromobacterium violaceum (strain ATCC 12472 / DSM 30191 / JCM 1249 / CCUG 213 / NBRC 12614 / NCIMB 9131 / NCTC 9757 / MK)).